A 702-amino-acid chain; its full sequence is Polyphosphate kinase (702 aa).

Asn-55 lines the ATP pocket. Mg(2+) contacts are provided by Arg-389 and Arg-419. His-449 acts as the Phosphohistidine intermediate in catalysis. 3 residues coordinate ATP: Tyr-482, Arg-578, and His-606.

This sequence belongs to the polyphosphate kinase 1 (PPK1) family. Requires Mg(2+) as cofactor. An intermediate of this reaction is the autophosphorylated ppk in which a phosphate is covalently linked to a histidine residue through a N-P bond.

The catalysed reaction is [phosphate](n) + ATP = [phosphate](n+1) + ADP. Its function is as follows. Catalyzes the reversible transfer of the terminal phosphate of ATP to form a long-chain polyphosphate (polyP). This is Polyphosphate kinase from Bacillus cereus (strain ATCC 14579 / DSM 31 / CCUG 7414 / JCM 2152 / NBRC 15305 / NCIMB 9373 / NCTC 2599 / NRRL B-3711).